The chain runs to 120 residues: Large ribosomal subunit protein bL17 (120 aa).

The protein belongs to the bacterial ribosomal protein bL17 family. Part of the 50S ribosomal subunit. Contacts protein L32.

This chain is Large ribosomal subunit protein bL17, found in Mycoplasmopsis pulmonis (strain UAB CTIP) (Mycoplasma pulmonis).